The sequence spans 254 residues: NAD-dependent protein deacylase (254 aa).

In terms of domain architecture, Deacetylase sirtuin-type spans 1–250; that stretch reads MERLEEARKR…LPPSPEDQAE (250 aa). 22–41 is an NAD(+) binding site; the sequence is GAGISKPSGIPTFRDAEGLW. Substrate contacts are provided by Tyr66 and Arg69. 104 to 107 contacts NAD(+); that stretch reads QNVD. Residue His122 is the Proton acceptor of the active site. Zn(2+)-binding residues include Cys130, Cys133, Cys149, and Cys152. Residues 189-191, 215-217, and Ala233 each bind NAD(+); these read GTS and NPE.

The protein belongs to the sirtuin family. Class III subfamily. Zn(2+) is required as a cofactor.

It is found in the cytoplasm. It catalyses the reaction N(6)-acetyl-L-lysyl-[protein] + NAD(+) + H2O = 2''-O-acetyl-ADP-D-ribose + nicotinamide + L-lysyl-[protein]. The enzyme catalyses N(6)-succinyl-L-lysyl-[protein] + NAD(+) + H2O = 2''-O-succinyl-ADP-D-ribose + nicotinamide + L-lysyl-[protein]. NAD-dependent lysine deacetylase and desuccinylase that specifically removes acetyl and succinyl groups on target proteins. Modulates the activities of several proteins which are inactive in their acylated form. The protein is NAD-dependent protein deacylase of Thermus thermophilus (strain ATCC BAA-163 / DSM 7039 / HB27).